The following is a 735-amino-acid chain: DNA replication licensing factor mcm5 (735 aa).

The MCM domain maps to 332 to 538; the sequence is IYETVAKSIA…RDMTLAKHVM (207 aa). Residue Arg372 participates in ADP binding. An Arginine finger motif is present at residues 513–516; sequence SRFD.

It belongs to the MCM family. In terms of assembly, component of the mcm2-7 complex (RLF-M). The complex forms a toroidal hexameric ring with the proposed subunit order mcm2-mcm6-mcm4-mcm7-mcm3-mcm5. The heterodimer of mmcm3/mcm5 interacts with mcm4, mmcm6, mcm7 and weakly with mcm2. Component of the CMG helicase complex, composed of the mcm2-7 complex, the GINS complex and cdc45.

It localises to the nucleus. Its subcellular location is the chromosome. The enzyme catalyses ATP + H2O = ADP + phosphate + H(+). Functionally, acts as a component of the MCM2-7 complex (MCM complex) which is the replicative helicase essential for 'once per cell cycle' DNA replication initiation and elongation in eukaryotic cells. Core component of CDC45-MCM-GINS (CMG) helicase, the molecular machine that unwinds template DNA during replication, and around which the replisome is built. The active ATPase sites in the MCM2-7 ring are formed through the interaction surfaces of two neighboring subunits such that a critical structure of a conserved arginine finger motif is provided in trans relative to the ATP-binding site of the Walker A box of the adjacent subunit. The six ATPase active sites, however, are likely to contribute differentially to the complex helicase activity. This chain is DNA replication licensing factor mcm5, found in Xenopus tropicalis (Western clawed frog).